The following is a 199-amino-acid chain: Dephospho-CoA kinase (199 aa).

One can recognise a DPCK domain in the interval 3 to 199; it reads VIGLTGSIGM…AAAKMPRRRS (197 aa). Residue 11–16 coordinates ATP; the sequence is GMGKST.

Belongs to the CoaE family.

The protein localises to the cytoplasm. The enzyme catalyses 3'-dephospho-CoA + ATP = ADP + CoA + H(+). Its pathway is cofactor biosynthesis; coenzyme A biosynthesis; CoA from (R)-pantothenate: step 5/5. Functionally, catalyzes the phosphorylation of the 3'-hydroxyl group of dephosphocoenzyme A to form coenzyme A. This chain is Dephospho-CoA kinase, found in Nitrobacter winogradskyi (strain ATCC 25391 / DSM 10237 / CIP 104748 / NCIMB 11846 / Nb-255).